The primary structure comprises 417 residues: Aromatic-amino-acid aminotransferase 1 (417 aa).

N6-(pyridoxal phosphate)lysine is present on lysine 258.

This sequence belongs to the class-I pyridoxal-phosphate-dependent aminotransferase family. Homodimer. It depends on pyridoxal 5'-phosphate as a cofactor.

It catalyses the reaction an aromatic L-alpha-amino acid + 2-oxoglutarate = an aromatic oxo-acid + L-glutamate. Functionally, catalyzes the transamination of phenylalanine, tyrosine and tryptophan. Shows virtually no activity towards aspartic acid, alanine, valine or isoleucine. This Thermococcus litoralis (strain ATCC 51850 / DSM 5473 / JCM 8560 / NS-C) protein is Aromatic-amino-acid aminotransferase 1.